We begin with the raw amino-acid sequence, 464 residues long: Fumarate hydratase class II (464 aa).

Substrate-binding positions include 100 to 102 (SGT), 131 to 134 (HPND), 141 to 143 (SSN), and threonine 189. Histidine 190 acts as the Proton donor/acceptor in catalysis. Serine 320 is an active-site residue. Substrate is bound by residues serine 321 and 326 to 328 (KVN).

It belongs to the class-II fumarase/aspartase family. Fumarase subfamily. As to quaternary structure, homotetramer.

It is found in the cytoplasm. The enzyme catalyses (S)-malate = fumarate + H2O. It functions in the pathway carbohydrate metabolism; tricarboxylic acid cycle; (S)-malate from fumarate: step 1/1. Involved in the TCA cycle. Catalyzes the stereospecific interconversion of fumarate to L-malate. The sequence is that of Fumarate hydratase class II from Deinococcus radiodurans (strain ATCC 13939 / DSM 20539 / JCM 16871 / CCUG 27074 / LMG 4051 / NBRC 15346 / NCIMB 9279 / VKM B-1422 / R1).